A 793-amino-acid polypeptide reads, in one-letter code: Translocase of chloroplast 90, chloroplastic (793 aa).

The tract at residues 22 to 59 is disordered; that stretch reads LGSDPFFRDPHQEQDNHSQAPAAPQPVTLSEPPCSTSS. The segment covering 27–37 has biased composition (basic and acidic residues); it reads FFRDPHQEQDN. Positions 130–157 form a coiled coil; sequence LIRAEESELKNVKLRQDRAKALAREQES. Residues 164 to 394 form the AIG1-type G domain; that stretch reads DFSLRILVLG…FRDSIGLGQP (231 aa). Positions 173-180 are G1; the sequence is GKTGVGKS. Residues 176–181 and 195–200 contribute to the GTP site; these read GVGKSA and DAFRPG. Ser-180 contacts Mg(2+). Residues 195–198 form a homodimerization region; sequence DAFR. Positions 199 to 203 are G2; sequence PGTDR. Positions 220-223 are G3; the sequence is DTPG. Residues 259–264 form a homodimerization region; it reads RLDMID. Residues 279–297 form a helical membrane-spanning segment; sequence IFGAAIWLNTILVMTHSAA. The G4 stretch occupies residues 293–296; it reads THSA. GTP contacts are provided by residues His-294 and 341–342; that span reads EN. Residues 341-343 are G5; sequence ENH. Coiled-coil stretches lie at residues 410 to 442 and 477 to 503; these read LRRR…YDQL and KKQL…DTEQ.

The protein belongs to the TRAFAC class TrmE-Era-EngA-EngB-Septin-like GTPase superfamily. AIG1/Toc34/Toc159-like paraseptin GTPase family. TOC159 subfamily. In terms of assembly, homodimer. Part of the TOC core complex that includes 1 protein for the specific recognition of transit peptides surrounded by a ring composed of four proteins forming translocation channels, and four to five GTP-binding proteins providing energy. This core complex can interact with components of the TIC complex to form a larger import complex. Chloroplastic protein precursor such as prSS (precursor of the RuBisCO small subunit) interacts with these complexes. The TOC complex contains a specific subset of polar lipids such as digalactosyldiacylglyceride (DGDG), phosphatidylcholine (PC) and phosphatidylglycerol (PG). Interacts with TOC33 and TOC75. Requires Mg(2+) as cofactor. In terms of tissue distribution, expressed in seedlings, leaves, flowers, and roots.

The protein localises to the plastid. It is found in the chloroplast outer membrane. Its subcellular location is the cytoplasm. In terms of biological role, GTPase involved in protein precursor import into chloroplasts. Seems to recognize chloroplast-destined precursor proteins and regulate their presentation to the translocation channel through GTP hydrolysis. Probably specialized in the import of nuclear encoded photosynthetic preproteins from the cytoplasm to the chloroplast. The chain is Translocase of chloroplast 90, chloroplastic (TOC90) from Arabidopsis thaliana (Mouse-ear cress).